A 339-amino-acid chain; its full sequence is Annexin A2 (339 aa).

Ser-2 carries the post-translational modification N-acetylserine. The tract at residues Ser-2–Tyr-24 is S100A10-binding site. Tyr-24 bears the Phosphotyrosine; by SRC mark. Position 26 is a phosphoserine; by PKC (Ser-26). Annexin repeat units lie at residues Phe-33–Lys-104 and Thr-105–Lys-176. Lys-49 carries the post-translational modification N6-acetyllysine; alternate. Lys-49 is covalently cross-linked (Glycyl lysine isopeptide (Lys-Gly) (interchain with G-Cter in SUMO1); alternate). Residue Lys-49 forms a Glycyl lysine isopeptide (Lys-Gly) (interchain with G-Cter in SUMO2); alternate linkage. At Lys-152 the chain carries N6-acetyllysine. Phosphoserine is present on Ser-184. 2 Annexin repeats span residues Glu-189–Gln-261 and Asn-265–Gly-336. Tyr-199 carries the phosphotyrosine modification. N6-acetyllysine is present on Lys-227.

It belongs to the annexin family. Heterotetramer containing 2 light chains of S100A10/p11 and 2 heavy chains of ANXA2/p36. Interacts with ATP1B1. Interacts with DYSF. Interacts with COCH. Interacts (via repeat Annexin 1) with PCSK9 (via the C-terminal domain); the interaction inhibits the degradation of LDLR. Interacts with CEACAM1 (via the cytoplasmic domain); this interaction is regulated by phosphorylation of CEACAM1. Interacts with APPL2 and APPL1; targets APPL2 to endosomes and acting in parallel to RAB5A. Interacts with S100A4. May interact with UBAP2. Interacts with PLEKHG4B; this interaction is required for PLEKHG4B localization to cell-cell adhesions. ISGylated.

The protein resides in the secreted. It is found in the extracellular space. It localises to the extracellular matrix. The protein localises to the basement membrane. Its subcellular location is the melanosome. Calcium-regulated membrane-binding protein whose affinity for calcium is greatly enhanced by anionic phospholipids. It binds two calcium ions with high affinity. May be involved in heat-stress response. Inhibits PCSK9-enhanced LDLR degradation, probably reduces PCSK9 protein levels via a translational mechanism but also competes with LDLR for binding with PCSK9. Binds to endosomes damaged by phagocytosis of particulate wear debris and participates in endosomal membrane stabilization, thereby limiting NLRP3 inflammasome activation. Required for endothelial cell surface plasmin generation and may support fibrinolytic surveillance and neoangiogenesis. This is Annexin A2 (ANXA2) from Bos taurus (Bovine).